The chain runs to 461 residues: tRNA modification GTPase MnmE (461 aa).

Residues Arg-22, Glu-87, and Arg-126 each contribute to the (6S)-5-formyl-5,6,7,8-tetrahydrofolate site. The TrmE-type G domain maps to 223 to 382 (GLSTVILGRP…LEEAIAALFF (160 aa)). Asn-233 lines the K(+) pocket. Residues 233 to 238 (NVGKSS), 252 to 258 (TDIAGTT), and 277 to 280 (DTAG) each bind GTP. Position 237 (Ser-237) interacts with Mg(2+). Thr-252, Ile-254, and Thr-257 together coordinate K(+). Thr-258 serves as a coordination point for Mg(2+). Lys-461 contributes to the (6S)-5-formyl-5,6,7,8-tetrahydrofolate binding site.

This sequence belongs to the TRAFAC class TrmE-Era-EngA-EngB-Septin-like GTPase superfamily. TrmE GTPase family. In terms of assembly, homodimer. Heterotetramer of two MnmE and two MnmG subunits. K(+) serves as cofactor.

It localises to the cytoplasm. Functionally, exhibits a very high intrinsic GTPase hydrolysis rate. Involved in the addition of a carboxymethylaminomethyl (cmnm) group at the wobble position (U34) of certain tRNAs, forming tRNA-cmnm(5)s(2)U34. The protein is tRNA modification GTPase MnmE of Lysinibacillus sphaericus (strain C3-41).